The chain runs to 747 residues: Phosphoribosylformylglycinamidine synthase subunit PurL (747 aa).

Residue H46 is part of the active site. Positions 49 and 88 each coordinate ATP. E90 contacts Mg(2+). Residues S91–H94 and R113 each bind substrate. The Proton acceptor role is filled by H92. D114 serves as a coordination point for Mg(2+). Q237 contacts substrate. D265 lines the Mg(2+) pocket. A substrate-binding site is contributed by E309 to Q311. Residues D493 and G530 each contribute to the ATP site. A Mg(2+)-binding site is contributed by N531. S533 provides a ligand contact to substrate.

Belongs to the FGAMS family. Monomer. Part of the FGAM synthase complex composed of 1 PurL, 1 PurQ and 2 PurS subunits.

It localises to the cytoplasm. It catalyses the reaction N(2)-formyl-N(1)-(5-phospho-beta-D-ribosyl)glycinamide + L-glutamine + ATP + H2O = 2-formamido-N(1)-(5-O-phospho-beta-D-ribosyl)acetamidine + L-glutamate + ADP + phosphate + H(+). Its pathway is purine metabolism; IMP biosynthesis via de novo pathway; 5-amino-1-(5-phospho-D-ribosyl)imidazole from N(2)-formyl-N(1)-(5-phospho-D-ribosyl)glycinamide: step 1/2. Part of the phosphoribosylformylglycinamidine synthase complex involved in the purines biosynthetic pathway. Catalyzes the ATP-dependent conversion of formylglycinamide ribonucleotide (FGAR) and glutamine to yield formylglycinamidine ribonucleotide (FGAM) and glutamate. The FGAM synthase complex is composed of three subunits. PurQ produces an ammonia molecule by converting glutamine to glutamate. PurL transfers the ammonia molecule to FGAR to form FGAM in an ATP-dependent manner. PurS interacts with PurQ and PurL and is thought to assist in the transfer of the ammonia molecule from PurQ to PurL. This Deinococcus radiodurans (strain ATCC 13939 / DSM 20539 / JCM 16871 / CCUG 27074 / LMG 4051 / NBRC 15346 / NCIMB 9279 / VKM B-1422 / R1) protein is Phosphoribosylformylglycinamidine synthase subunit PurL.